The following is a 272-amino-acid chain: Protein FAM210A (272 aa).

In terms of domain architecture, DUF1279 spans 117–229; the sequence is DKSISLYQRF…GYMSTPPPVK (113 aa). The helical transmembrane segment at 136–156 threads the bilayer; it reads VLIPVHLITSGVWFGTFYYAA. A coiled-coil region spans residues 229-271; that stretch reads KEYLQDRMEETKELITEKMEETKDRLTEKLQETKEKVSFKKKV. Positions 246 to 272 are disordered; that stretch reads KMEETKDRLTEKLQETKEKVSFKKKVE.

This sequence belongs to the FAM210 family. Interacts with ATAD3A.

It is found in the membrane. The protein resides in the mitochondrion. It localises to the cytoplasm. Its function is as follows. May play a role in the structure and strength of both muscle and bone. The chain is Protein FAM210A (FAM210A) from Homo sapiens (Human).